We begin with the raw amino-acid sequence, 252 residues long: Phosphate import ATP-binding protein PstB (252 aa).

Residues 6–247 form the ABC transporter domain; that stretch reads IEVKNLNTYF…PKNKQTENYI (242 aa). ATP is bound at residue 38-45; the sequence is GPSGCGKS.

Belongs to the ABC transporter superfamily. Phosphate importer (TC 3.A.1.7) family. As to quaternary structure, the complex is composed of two ATP-binding proteins (PstB), two transmembrane proteins (PstC and PstA) and a solute-binding protein (PstS).

Its subcellular location is the cell membrane. It carries out the reaction phosphate(out) + ATP + H2O = ADP + 2 phosphate(in) + H(+). Its function is as follows. Part of the ABC transporter complex PstSACB involved in phosphate import. Responsible for energy coupling to the transport system. The sequence is that of Phosphate import ATP-binding protein PstB from Methanosphaera stadtmanae (strain ATCC 43021 / DSM 3091 / JCM 11832 / MCB-3).